The following is a 135-amino-acid chain: L-ectoine synthase (135 aa).

The protein belongs to the ectoine synthase family.

It catalyses the reaction (2S)-4-acetamido-2-aminobutanoate = L-ectoine + H2O. The protein operates within amine and polyamine biosynthesis; ectoine biosynthesis; L-ectoine from L-aspartate 4-semialdehyde: step 3/3. Catalyzes the circularization of gamma-N-acetyl-alpha,gamma-diaminobutyric acid (ADABA) to ectoine (1,4,5,6-tetrahydro-2-methyl-4-pyrimidine carboxylic acid), which is an excellent osmoprotectant. The sequence is that of L-ectoine synthase from Hyphomonas neptunium (strain ATCC 15444).